The chain runs to 408 residues: PCI domain-containing protein 2 (408 aa).

N-acetylalanine is present on Ala-2. Phosphoserine is present on Ser-45. The PCI domain occupies 210-400; that stretch reads VTYRYYVGRK…QKLVVSKQNP (191 aa).

This sequence belongs to the CSN12 family. In terms of assembly, component of the nuclear pore complex (NPC)-associated TREX-2 complex (transcription and export complex 2), composed of at least GANP, 2 copies of ENY2, PCID2, SEM1/DSS1, and either centrin CETN2 or centrin CETN3. The TREX-2 complex also associates with ALYREF/ALY and with the nucleoporin NUP153. Interacts with BRCA2. Interacts with SRCAP chromatin remodeling complex component ZNHIT1; the interaction results in inhibition of SRCAP complex activity, preventing the deposition of histone variant H2AZ1/H2A.Z to lymphoid fate regulator genes and restricting lymphoid lineage commitment.

Its subcellular location is the cytoplasm. The protein resides in the nucleus. It is found in the nuclear pore complex. In terms of biological role, required for B-cell survival through the regulation of the expression of cell-cycle checkpoint MAD2L1 protein during B cell differentiation. As a component of the TREX-2 complex, involved in the export of mRNAs to the cytoplasm through the nuclear pores. Binds and stabilizes BRCA2 and is thus involved in the control of R-loop-associated DNA damage and transcription-associated genomic instability. Blocks the activity of the SRCAP chromatin remodeling complex by interacting with SRCAP complex member ZNHIT1 and inhibiting its interaction with the complex. This prevents the deposition of histone variant H2AZ1/H2A.Z at the nucleosomes of key lymphoid fate regulator genes which suppresses their expression and restricts lymphoid lineage commitment. The sequence is that of PCI domain-containing protein 2 (PCID2) from Bos taurus (Bovine).